Consider the following 96-residue polypeptide: Cytochrome c-553 (96 aa).

The N-terminal stretch at 1–19 (MKKVIVALGVLAFANVLMA) is a signal peptide. Heme c-binding residues include Cys-29, Cys-32, His-33, and Met-73.

The protein belongs to the cytochrome c family. Post-translationally, binds 1 heme c group covalently per subunit.

The protein resides in the periplasm. In terms of biological role, natural electron acceptor for a formate dehydrogenase. This chain is Cytochrome c-553, found in Helicobacter pylori (strain J99 / ATCC 700824) (Campylobacter pylori J99).